Consider the following 235-residue polypeptide: Vinculin (235 aa).

This sequence belongs to the vinculin/alpha-catenin family. As to quaternary structure, exhibits self-association properties. Phosphorylated on serines, threonines and tyrosines. In terms of processing, acetylated by myristic acid and/or palmitic acid.

The protein localises to the cell membrane. It localises to the cell junction. The protein resides in the adherens junction. It is found in the focal adhesion. Its subcellular location is the cytoplasm. The protein localises to the cytoskeleton. It localises to the sarcolemma. The protein resides in the cell projection. It is found in the podosome. Involved in cell adhesion. May be involved in the attachment of the actin-based microfilaments to the plasma membrane. This chain is Vinculin (vcl), found in Xenopus laevis (African clawed frog).